We begin with the raw amino-acid sequence, 467 residues long: Probable amino acid permease 7 (467 aa).

The Cytoplasmic portion of the chain corresponds to 1-29 (MDIKEDDESRVITPTELQLHDSVTARTGT). Residues 30–50 (LWTAVAHIITGVIGAGVLSLA) form a helical membrane-spanning segment. Residues 51–58 (WATAELGW) lie on the Extracellular side of the membrane. Residues 59 to 79 (IAGPAALIAFAGVTLLSAFLL) form a helical membrane-spanning segment. The Cytoplasmic segment spans residues 80 to 111 (SDCYRFPDPNNGPLRLNSYSQAVKLYLGKKNE). The helical transmembrane segment at 112 to 132 (IVCGVVVYISLFGCGIAYTIV) threads the bilayer. Residues 133 to 163 (IATCSRAIMKSNCYHRNGHNATCSYGDNNNY) are Extracellular-facing. The next 2 helical transmembrane spans lie at 164-184 (FMVL…FHNM) and 185-205 (VWLS…GIGL). Residues 206 to 231 (ALGKIIENRKIEGSIRGIPAENRGEK) are Extracellular-facing. The helical transmembrane segment at 232-252 (VWIVFQALGNIAFSYPFSIIL) threads the bilayer. At 253 to 274 (LEIQDTLRSPPAEKQTMKKAST) the chain is on the cytoplasmic side. A helical membrane pass occupies residues 275 to 295 (VAVFIQTFFFFCCGCFGYAAF). The Extracellular portion of the chain corresponds to 296–312 (GDSTPGNLLTGFGFYEP). A helical membrane pass occupies residues 313–333 (FWLVDFANACIVLHLVGGYQV). At 334–383 (YSQPIFAAAERSLTKKYPENKFIARFYGFKLPLLRGETVRLNPMRMCLRT) the chain is on the cytoplasmic side. Helical transmembrane passes span 384–404 (MYVL…EVLG) and 405–425 (VVGA…MCIL). At 426 to 443 (QKKIRSWTRPWLLLRGFS) the chain is on the cytoplasmic side. Residues 444–464 (FVCLLVCLLSLVGSIYGLVGA) form a helical membrane-spanning segment. Residues 465 to 467 (KFG) are Extracellular-facing.

The protein belongs to the amino acid/polyamine transporter 2 family. Amino acid/auxin permease (AAAP) (TC 2.A.18.2) subfamily.

It is found in the cell membrane. Its function is as follows. Amino acid-proton symporter. Stereospecific transporter with a broad specificity for neutral amino acids. This is Probable amino acid permease 7 (AAP7) from Arabidopsis thaliana (Mouse-ear cress).